The chain runs to 524 residues: Cytochrome P450 4F3 (524 aa).

A helical transmembrane segment spans residues 19–39; it reads WLLLLLAGASCLLAYILTPIY. Cys468 is a heme binding site.

This sequence belongs to the cytochrome P450 family. It depends on heme as a cofactor. Highest level in polymorphonuclear leukocytes and dendritic cells. Detectable in lymph nodes, spleen, bone marrow and peripheral blood. Highly expressed in ovary. Very low level in liver, kidney, and smooth muscle. Expressed in neutrophils (at protein level).

The protein localises to the endoplasmic reticulum membrane. It is found in the microsome membrane. It carries out the reaction leukotriene B4 + reduced [NADPH--hemoprotein reductase] + O2 = 18-hydroxy-leukotriene B4 + oxidized [NADPH--hemoprotein reductase] + H2O + H(+). The catalysed reaction is leukotriene B4 + reduced [NADPH--hemoprotein reductase] + O2 = 19-hydroxy-leukotriene B4 + oxidized [NADPH--hemoprotein reductase] + H2O + H(+). It participates in lipid metabolism; leukotriene B4 degradation. Functionally, a cytochrome P450 monooxygenase involved in the metabolism of the pro-inflammatory lipid mediator leukotriene B4 (LTB4). Hydroxylates at the omega-1 and omega-2 positions LTB4. This oxidation step leads to LTB4 inactivation, which is postulated to be a crucial part of the resolution of inflammation. Mechanistically, uses molecular oxygen inserting one oxygen atom into a substrate, and reducing the second into a water molecule, with two electrons provided by NADPH via cytochrome P450 reductase (CPR; NADPH-ferrihemoprotein reductase). This is Cytochrome P450 4F3 from Mus musculus (Mouse).